We begin with the raw amino-acid sequence, 212 residues long: Pyrrolidone-carboxylate peptidase (212 aa).

Catalysis depends on residues Glu-78, Cys-141, and His-165.

It belongs to the peptidase C15 family. In terms of assembly, homotetramer.

It localises to the cytoplasm. The catalysed reaction is Release of an N-terminal pyroglutamyl group from a polypeptide, the second amino acid generally not being Pro.. Its function is as follows. Removes 5-oxoproline from various penultimate amino acid residues except L-proline. In Staphylococcus aureus, this protein is Pyrrolidone-carboxylate peptidase (pcp).